We begin with the raw amino-acid sequence, 37 residues long: Large ribosomal subunit protein bL36 (37 aa).

It belongs to the bacterial ribosomal protein bL36 family.

The polypeptide is Large ribosomal subunit protein bL36 (Mycoplasmopsis pulmonis (strain UAB CTIP) (Mycoplasma pulmonis)).